The following is a 174-amino-acid chain: Interleukin-10 (174 aa).

An N-terminal signal peptide occupies residues 1 to 16; sequence MPTWMLLFCLLCVTSS. An N-linked (GlcNAc...) asparagine glycan is attached at asparagine 17. 2 disulfides stabilise this stretch: cysteine 26–cysteine 122 and cysteine 76–cysteine 128.

Belongs to the IL-10 family. Homodimer. Interacts with IL10RA and IL10RB.

The protein localises to the secreted. Its function is as follows. Major immune regulatory cytokine that acts on many cells of the immune system where it has profound anti-inflammatory functions, limiting excessive tissue disruption caused by inflammation. Mechanistically, IL10 binds to its heterotetrameric receptor comprising IL10RA and IL10RB leading to JAK1 and STAT2-mediated phosphorylation of STAT3. In turn, STAT3 translocates to the nucleus where it drives expression of anti-inflammatory mediators. Targets antigen-presenting cells (APCs) such as macrophages and monocytes and inhibits their release of pro-inflammatory cytokines including granulocyte-macrophage colony-stimulating factor /GM-CSF, granulocyte colony-stimulating factor/G-CSF, IL-1 alpha, IL-1 beta, IL-6, IL-8 and TNF-alpha. Also interferes with antigen presentation by reducing the expression of MHC-class II and co-stimulatory molecules, thereby inhibiting their ability to induce T cell activation. In addition, controls the inflammatory response of macrophages by reprogramming essential metabolic pathways including mTOR signaling. The chain is Interleukin-10 (IL10) from Trichosurus vulpecula (Brush-tailed possum).